The primary structure comprises 421 residues: Transcription factor rglT (421 aa).

A disordered region spans residues 1-29 (MQYEAYQWGQSHPTSTSGSMLQDTPTAAS). The segment covering 8–29 (WGQSHPTSTSGSMLQDTPTAAS) has biased composition (polar residues). The segment at residues 38-65 (CDECRKRKLKCSGEISGCSRCIKQSLSC) is a DNA-binding region (zn(2)-C6 fungal-type). A compositionally biased stretch (basic and acidic residues) spans 346–357 (EARQRRWHESPD). Residues 346–371 (EARQRRWHESPDSHPLPPDQRLNIPS) are disordered.

It is found in the nucleus. In terms of biological role, transcription factor that is important for oxidative stress resistance and essential for gliotoxin (GT) self-protection through the regulation of a gene encoding a putative gliT homolog, even if E.nidulans does not produce gliotoxin itself. The protein is Transcription factor rglT of Emericella nidulans (strain FGSC A4 / ATCC 38163 / CBS 112.46 / NRRL 194 / M139) (Aspergillus nidulans).